The primary structure comprises 396 residues: L-aspartate--glyoxylate aminotransferase (396 aa).

N6-(pyridoxal phosphate)lysine is present on K196.

This sequence belongs to the class-V pyridoxal-phosphate-dependent aminotransferase family. Requires pyridoxal 5'-phosphate as cofactor.

The enzyme catalyses oxaloacetate + glycine = glyoxylate + L-aspartate. In terms of biological role, catalyzes the transamination of glyoxylate into glycine using L-aspartate as the preferred amino group donor. Is essential for the growth of P.denitrificans in the presence of glycolate and glyoxylate since it functions in glyoxylate assimilation via the beta-hydroxyaspartate cycle (BHAC). Can catalyze the reverse reaction in vitro, and also use L-serine and L-glutamate as amino group donor, but with much less efficiency than L-aspartate. The sequence is that of L-aspartate--glyoxylate aminotransferase from Paracoccus denitrificans (strain Pd 1222).